The sequence spans 391 residues: Formate-dependent phosphoribosylglycinamide formyltransferase (391 aa).

N(1)-(5-phospho-beta-D-ribosyl)glycinamide-binding positions include 20 to 21 (EL) and Glu80. Residues Arg112, Lys153, 158–163 (SSGKGQ), 193–196 (EGFV), and Glu201 each bind ATP. In terms of domain architecture, ATP-grasp spans 117–306 (RLAAETLGLP…EFALHVRAIL (190 aa)). Positions 265 and 277 each coordinate Mg(2+). N(1)-(5-phospho-beta-D-ribosyl)glycinamide-binding positions include Asp284, Lys354, and 361 to 362 (RR).

This sequence belongs to the PurK/PurT family. As to quaternary structure, homodimer.

The enzyme catalyses N(1)-(5-phospho-beta-D-ribosyl)glycinamide + formate + ATP = N(2)-formyl-N(1)-(5-phospho-beta-D-ribosyl)glycinamide + ADP + phosphate + H(+). It functions in the pathway purine metabolism; IMP biosynthesis via de novo pathway; N(2)-formyl-N(1)-(5-phospho-D-ribosyl)glycinamide from N(1)-(5-phospho-D-ribosyl)glycinamide (formate route): step 1/1. Involved in the de novo purine biosynthesis. Catalyzes the transfer of formate to 5-phospho-ribosyl-glycinamide (GAR), producing 5-phospho-ribosyl-N-formylglycinamide (FGAR). Formate is provided by PurU via hydrolysis of 10-formyl-tetrahydrofolate. The chain is Formate-dependent phosphoribosylglycinamide formyltransferase from Shewanella sp. (strain W3-18-1).